Reading from the N-terminus, the 617-residue chain is Putative type VI secretion system protein VgrGB (617 aa).

Residues 449-469 (RTFHATNPSPYPLPASKTRTS) form a disordered region.

This sequence belongs to the VgrG protein family.

A Vgr protein that is probably part of a type VI secretion system (T6SS). May be required for export of proteins involved in Rhs-mediated cellular contact-dependent growth inhibition (CDI). This is Putative type VI secretion system protein VgrGB (vgrGB) from Dickeya dadantii (strain 3937) (Erwinia chrysanthemi (strain 3937)).